A 485-amino-acid polypeptide reads, in one-letter code: Glutamate--tRNA ligase (485 aa).

The 'HIGH' region motif lies at 11–21; it reads PSPTGLLHIGN. The short motif at 255–259 is the 'KMSKS' region element; the sequence is KLSKR. K258 is an ATP binding site.

The protein belongs to the class-I aminoacyl-tRNA synthetase family. Glutamate--tRNA ligase type 1 subfamily. As to quaternary structure, monomer.

The protein localises to the cytoplasm. It carries out the reaction tRNA(Glu) + L-glutamate + ATP = L-glutamyl-tRNA(Glu) + AMP + diphosphate. Functionally, catalyzes the attachment of glutamate to tRNA(Glu) in a two-step reaction: glutamate is first activated by ATP to form Glu-AMP and then transferred to the acceptor end of tRNA(Glu). This Streptococcus gordonii (strain Challis / ATCC 35105 / BCRC 15272 / CH1 / DL1 / V288) protein is Glutamate--tRNA ligase.